A 245-amino-acid chain; its full sequence is NAD-dependent protein deacetylase (245 aa).

One can recognise a Deacetylase sirtuin-type domain in the interval 1 to 245 (MLLLDKINEL…SIGKVLETVI (245 aa)). Positions 26, 30, 37, 38, 107, 109, 110, and 125 each coordinate NAD(+). Residue Phe-37 participates in nicotinamide binding. Ile-109 and Asp-110 together coordinate nicotinamide. His-125 (proton acceptor) is an active-site residue. Zn(2+) contacts are provided by Cys-133, Cys-136, Cys-155, and Cys-158. Residues Thr-196, Ser-197, Asn-219, and Ile-237 each coordinate NAD(+).

This sequence belongs to the sirtuin family. Class U subfamily. Zn(2+) is required as a cofactor.

It is found in the cytoplasm. The catalysed reaction is N(6)-acetyl-L-lysyl-[protein] + NAD(+) + H2O = 2''-O-acetyl-ADP-D-ribose + nicotinamide + L-lysyl-[protein]. Its function is as follows. NAD-dependent protein deacetylase which modulates the activities of several enzymes which are inactive in their acetylated form. This Clostridium acetobutylicum (strain ATCC 824 / DSM 792 / JCM 1419 / IAM 19013 / LMG 5710 / NBRC 13948 / NRRL B-527 / VKM B-1787 / 2291 / W) protein is NAD-dependent protein deacetylase.